Consider the following 127-residue polypeptide: Large ribosomal subunit protein bL12 (127 aa).

The protein belongs to the bacterial ribosomal protein bL12 family. In terms of assembly, homodimer. Part of the ribosomal stalk of the 50S ribosomal subunit. Forms a multimeric L10(L12)X complex, where L10 forms an elongated spine to which 2 to 4 L12 dimers bind in a sequential fashion. Binds GTP-bound translation factors.

Its function is as follows. Forms part of the ribosomal stalk which helps the ribosome interact with GTP-bound translation factors. Is thus essential for accurate translation. The chain is Large ribosomal subunit protein bL12 from Syntrophotalea carbinolica (strain DSM 2380 / NBRC 103641 / GraBd1) (Pelobacter carbinolicus).